We begin with the raw amino-acid sequence, 183 residues long: Adenine phosphoribosyltransferase (183 aa).

This sequence belongs to the purine/pyrimidine phosphoribosyltransferase family. Homodimer.

The protein localises to the cytoplasm. It carries out the reaction AMP + diphosphate = 5-phospho-alpha-D-ribose 1-diphosphate + adenine. It participates in purine metabolism; AMP biosynthesis via salvage pathway; AMP from adenine: step 1/1. Functionally, catalyzes a salvage reaction resulting in the formation of AMP, that is energically less costly than de novo synthesis. This Blochmanniella floridana protein is Adenine phosphoribosyltransferase.